The chain runs to 173 residues: CKLF-like MARVEL transmembrane domain-containing protein 8 (173 aa).

The 133-residue stretch at Phe36–Arg168 folds into the MARVEL domain. 4 helical membrane passes run Leu40–Ala60, Phe70–Ile90, Thr105–Val125, and Phe147–Trp167.

The protein belongs to the chemokine-like factor family.

The protein localises to the membrane. This chain is CKLF-like MARVEL transmembrane domain-containing protein 8 (CMTM8), found in Bos taurus (Bovine).